The chain runs to 252 residues: Outer membrane protein P1 (252 aa).

The signal sequence occupies residues 1–23 (METTTKLAIGVSALCCLASAAFA).

Belongs to the Coxiella porin P1 (CPP1) (TC 1.B.43) family. In terms of assembly, may form trimers.

It localises to the cell outer membrane. In terms of biological role, able to form a pore in lipid bilayers. In Coxiella burnetii (strain RSA 493 / Nine Mile phase I), this protein is Outer membrane protein P1 (ompP1).